Consider the following 268-residue polypeptide: MSSIELGKQAEYPEQYSPDCLEPIARSLSRSGLGLNASALPFTGLDVWTGYELSWLDLSGKPQVAIGYFEFDAKTDAIVESKSFKYYLNSFNQTRFESWAAVQTLMQQDLANASGGDVNVRLEPLSAVSPLETPAGQCIDDCPLEAAVYTPDAALLKVEQGEVSEQLFSHLLKSNCPVTGQPDWATVWVSYRGNKITPESLLAYVVSYRQHQDFHENCVEKIFTDIMAQCAPVELSVYARYTRRGGLDINPFRTNCGAALPGWRIVRQ.

Residue 79–81 participates in substrate binding; that stretch reads VES. 81 to 82 provides a ligand contact to NADPH; the sequence is SK. C176 (thioimide intermediate) is an active-site residue. The Proton donor role is filled by D183. A substrate-binding site is contributed by 215–216; the sequence is HE. 244–245 contacts NADPH; the sequence is RG.

Belongs to the GTP cyclohydrolase I family. QueF type 2 subfamily. Homodimer.

It is found in the cytoplasm. It catalyses the reaction 7-aminomethyl-7-carbaguanine + 2 NADP(+) = 7-cyano-7-deazaguanine + 2 NADPH + 3 H(+). It functions in the pathway tRNA modification; tRNA-queuosine biosynthesis. Catalyzes the NADPH-dependent reduction of 7-cyano-7-deazaguanine (preQ0) to 7-aminomethyl-7-deazaguanine (preQ1). The polypeptide is NADPH-dependent 7-cyano-7-deazaguanine reductase (Saccharophagus degradans (strain 2-40 / ATCC 43961 / DSM 17024)).